Consider the following 404-residue polypeptide: Cysteine desulfurase IscS (404 aa).

Pyridoxal 5'-phosphate contacts are provided by residues 75 to 76 (AT), N155, Q183, and 203 to 205 (SAH). N6-(pyridoxal phosphate)lysine is present on K206. A pyridoxal 5'-phosphate-binding site is contributed by T243. The active-site Cysteine persulfide intermediate is the C328. C328 contributes to the [2Fe-2S] cluster binding site.

This sequence belongs to the class-V pyridoxal-phosphate-dependent aminotransferase family. NifS/IscS subfamily. In terms of assembly, homodimer. Forms a heterotetramer with IscU, interacts with other sulfur acceptors. Pyridoxal 5'-phosphate is required as a cofactor.

Its subcellular location is the cytoplasm. The enzyme catalyses (sulfur carrier)-H + L-cysteine = (sulfur carrier)-SH + L-alanine. It functions in the pathway cofactor biosynthesis; iron-sulfur cluster biosynthesis. Its function is as follows. Master enzyme that delivers sulfur to a number of partners involved in Fe-S cluster assembly, tRNA modification or cofactor biosynthesis. Catalyzes the removal of elemental sulfur atoms from cysteine to produce alanine. Functions as a sulfur delivery protein for Fe-S cluster synthesis onto IscU, an Fe-S scaffold assembly protein, as well as other S acceptor proteins. This chain is Cysteine desulfurase IscS, found in Pseudomonas aeruginosa (strain UCBPP-PA14).